We begin with the raw amino-acid sequence, 346 residues long: Histidinol-phosphate aminotransferase (346 aa).

Residue Lys209 is modified to N6-(pyridoxal phosphate)lysine.

Belongs to the class-II pyridoxal-phosphate-dependent aminotransferase family. Histidinol-phosphate aminotransferase subfamily. In terms of assembly, homodimer. Pyridoxal 5'-phosphate is required as a cofactor.

The enzyme catalyses L-histidinol phosphate + 2-oxoglutarate = 3-(imidazol-4-yl)-2-oxopropyl phosphate + L-glutamate. It participates in amino-acid biosynthesis; L-histidine biosynthesis; L-histidine from 5-phospho-alpha-D-ribose 1-diphosphate: step 7/9. The sequence is that of Histidinol-phosphate aminotransferase from Vibrio campbellii (strain ATCC BAA-1116).